A 145-amino-acid polypeptide reads, in one-letter code: Large ribosomal subunit protein uL11 (145 aa).

The protein belongs to the universal ribosomal protein uL11 family. In terms of assembly, part of the ribosomal stalk of the 50S ribosomal subunit. Interacts with L10 and the large rRNA to form the base of the stalk. L10 forms an elongated spine to which L12 dimers bind in a sequential fashion forming a multimeric L10(L12)X complex. Post-translationally, one or more lysine residues are methylated.

Forms part of the ribosomal stalk which helps the ribosome interact with GTP-bound translation factors. The polypeptide is Large ribosomal subunit protein uL11 (Porphyromonas gingivalis (strain ATCC 33277 / DSM 20709 / CIP 103683 / JCM 12257 / NCTC 11834 / 2561)).